The primary structure comprises 2572 residues: Zinc finger homeobox protein 2 (2572 aa).

Disordered regions lie at residues 1-107 (MATL…GLPP) and 343-425 (LSPP…ADDY). Residues 8–36 (STTGTTPSPGHNAPSLPSDTFSSSTPSDP) show a composition bias toward low complexity. Polar residues-rich tracts occupy residues 44–53 (ASSTSENMRS) and 389–398 (LNQSSPTSKE). 2 consecutive C2H2-type zinc fingers follow at residues 453–476 (LKCP…REKH) and 508–532 (YRCD…SDKH). Disordered stretches follow at residues 537-566 (QGFQ…PKTK), 608-655 (LPPG…LRPD), and 675-710 (RKFP…SPPP). Residues 615–628 (PGPPPPPGATPTSP) are compositionally biased toward pro residues. Residues 696–705 (LLGSSSDSLP) are compositionally biased toward low complexity. 2 C2H2-type zinc fingers span residues 821-845 (LRCN…GAAH) and 870-894 (YHCL…TPAH). The interval 929-974 (QLRTPGKAPVTPLAEPPTPEKDAQNKTEQLASEETENKTGPSRDSA) is disordered. Over residues 954 to 974 (KTEQLASEETENKTGPSRDSA) the composition is skewed to polar residues. The C2H2-type 5 zinc finger occupies 1009–1032 (YRCPLCQEQLVGRPALHFHLSHLH). The interval 1061–1171 (PTLSPLDNGQ…PAPADSRHPL (111 aa)) is disordered. Positions 1120–1132 (GQPPSPAPSPVPE) are enriched in pro residues. 2 consecutive C2H2-type zinc fingers follow at residues 1191–1217 (YKCT…SHLH) and 1248–1272 (FKCT…SVLH). Disordered stretches follow at residues 1269–1325 (SVLH…FLSP), 1389–1408 (LPAA…LAER), and 1415–1434 (MAKE…LPNE). Basic and acidic residues predominate over residues 1279–1311 (TKTDSKIEGPERSQEEPKEGETEGEVGTEKKGP). Over residues 1392 to 1401 (ATPPPPPQPP) the composition is skewed to pro residues. The C2H2-type 8 zinc-finger motif lies at 1480 to 1503 (LACGACGKLFSNMLILKTHEEHVH). Residues 1528-1591 (PPLAEPPKPP…SSRGNLPPLV (64 aa)) form a disordered region. The homeobox 1 DNA-binding region spans 1595–1654 (RRFSRTKFTEFQTQALQSFFETSAYPKDGEVERLASLLGLASRVVVVWFQNARQKARKNA). A C2H2-type 9; degenerate zinc finger spans residues 1670–1696 (SGCRRCHATFSCVFELVRHLKKCYDDQ). Over residues 1696–1724 (QTLEEEEEEAERGEEEEEVEEEEVEEEQG) the composition is skewed to acidic residues. Disordered regions lie at residues 1696 to 1769 (QTLE…SPAH), 1820 to 1860 (AATS…DKRL), 1912 to 2065 (ERKG…GMGQ), 2268 to 2327 (VQTA…NDAL), and 2398 to 2431 (NALL…EAGE). The segment covering 1728–1738 (PAGPEGPLPEP) has biased composition (pro residues). The segment at 1769–1791 (HTCDQCAISFSSQDLLTSHRRLH) adopts a C2H2-type 10 zinc-finger fold. A DNA-binding region (homeobox 2) is located at residues 1857-1916 (DKRLRTTILPEQLEILYRWYMQDSNPTRKMLDCISEEVGLKKRVVQVWFQNTRARERKGQ). Over residues 1925–1939 (PSPAVKPPATATPAS) the composition is skewed to low complexity. Residues 1949–1963 (KVDDGTGREAPKREA) show a composition bias toward basic and acidic residues. A compositionally biased stretch (pro residues) spans 1991-2004 (TPEPPLPLLPPPPP). Residues 2017–2044 (SPESEACSLSAGDLSDSSASSLAEPESP) are compositionally biased toward low complexity. Residues 2045-2061 (GAGGTSGGPGGGTGVPD) show a composition bias toward gly residues. A DNA-binding region (homeobox 3) is located at residues 2065–2124 (QRRYRTQMSSLQLKIMKACYEAYRTPTMQECEVLGEEIGLPKRVIQVWFQNARAKEKKAK). Over residues 2284–2293 (DQTNTSTAGT) the composition is skewed to polar residues. The span at 2305 to 2315 (LGDKVSSERKP) shows a compositional bias: basic and acidic residues. Residues 2402 to 2422 (QPPPQPPEPTATAPPKPPELP) are compositionally biased toward pro residues. The C2H2-type 11; degenerate zinc-finger motif lies at 2451–2471 (YLCRQCKMAFDGEAPATAHQR). The C2H2-type 12 zinc-finger motif lies at 2495–2519 (YHCLACEVLLSGREALASHLRSSAH). The tract at residues 2551-2572 (EARLPHTDSNPKTTTTSTLLAL) is disordered. Positions 2563–2572 (TTTTSTLLAL) are enriched in low complexity.

It localises to the nucleus. In terms of biological role, transcriptional regulator that is critical for the regulation of pain perception and processing of noxious stimuli. The sequence is that of Zinc finger homeobox protein 2 (ZFHX2) from Homo sapiens (Human).